The following is a 552-amino-acid chain: uncharacterized protein (552 aa).

In terms of domain architecture, DhaL spans 8–200 (KLFADMIIQG…LLCVYEGFLK (193 aa)).

This is an uncharacterized protein from Staphylococcus haemolyticus (strain JCSC1435).